A 575-amino-acid polypeptide reads, in one-letter code: Regulatory protein zeste (575 aa).

Positions 1 to 26 are enriched in gly residues; that stretch reads MSAQGEGGGAGGSGGGGAGSDGGGNA. Disordered stretches follow at residues 1–53 and 151–174; these read MSAQ…LPLT and SVAS…VKVE. The segment at 2–47 is hydrophobic; the sequence is SAQGEGGGAGGSGGGGAGSDGGGNAGQSSTGSGTVAVTNGGNSSAK. The span at 31–51 shows a compositional bias: polar residues; that stretch reads TGSGTVAVTNGGNSSAKNQLP. Residues 48–128 mediate DNA binding; the sequence is NQLPLTPRFT…WLNSRLRKQY (81 aa). A compositionally biased stretch (low complexity) spans 151–164; that stretch reads SVASAVPQQQQQQH.

Self-associates forming complexes of several hundred monomers.

Its subcellular location is the nucleus. Involved in transvection phenomena (= synapsis-dependent gene expression), where the synaptic pairing of chromosomes carrying genes with which zeste interacts influences the expression of these genes. Zeste binds to DNA and stimulates transcription from a nearby promoter. The chain is Regulatory protein zeste (z) from Drosophila melanogaster (Fruit fly).